The following is a 496-amino-acid chain: Deoxyribodipyrimidine photo-lyase (496 aa).

Residues 28–160 (GPVVYWMFRD…EVDAHNVVPM (133 aa)) enclose the Photolyase/cryptochrome alpha/beta domain. FAD-binding positions include Tyr256, 269–273 (LSGLS), 307–315 (ELIVRRELS), and 415–417 (DGR). DNA is bound at residue Glu307.

This sequence belongs to the DNA photolyase class-2 family. It depends on FAD as a cofactor. Highly expressed in flowers. Expressed in roots and stems.

The protein localises to the nucleus. It catalyses the reaction cyclobutadipyrimidine (in DNA) = 2 pyrimidine residues (in DNA).. Involved in repair of UV radiation-induced DNA damage. Catalyzes the light-dependent monomerization (300-600 nm) of cyclobutylpyrimidine dimers (CPDs), which are formed between adjacent bases on the same DNA strand upon exposure to ultraviolet radiation. Required for plant survival in the presence of UV-B light. Not involved in the repair of (6-4) photoproducts. In Arabidopsis thaliana (Mouse-ear cress), this protein is Deoxyribodipyrimidine photo-lyase (PHR1).